Here is a 320-residue protein sequence, read N- to C-terminus: Variant surface glycoprotein ILTAT 1.2 (320 aa).

3 N-linked (GlcNAc...) asparagine glycosylation sites follow: asparagine 146, asparagine 282, and asparagine 295. Residues 297 to 320 (TKATENGVPVAQTQTGGSETTTEK) are disordered. Low complexity predominate over residues 308–320 (QTQTGGSETTTEK).

It is found in the cell membrane. Functionally, VSG forms a coat on the surface of the parasite. The trypanosome evades the immune response of the host by expressing a series of antigenically distinct VSGs from an estimated 1000 VSG genes. The polypeptide is Variant surface glycoprotein ILTAT 1.2 (Trypanosoma brucei brucei).